A 951-amino-acid chain; its full sequence is Valine--tRNA ligase (951 aa).

A 'HIGH' region motif is present at residues 42 to 52 (PNVTGSLHMGH). Residues 554-558 (KMSKS) carry the 'KMSKS' region motif. Residue K557 participates in ATP binding. The stretch at 880-944 (AGLINKEDEL…AEAKAKLIEQ (65 aa)) forms a coiled coil.

The protein belongs to the class-I aminoacyl-tRNA synthetase family. ValS type 1 subfamily. Monomer.

Its subcellular location is the cytoplasm. It carries out the reaction tRNA(Val) + L-valine + ATP = L-valyl-tRNA(Val) + AMP + diphosphate. Catalyzes the attachment of valine to tRNA(Val). As ValRS can inadvertently accommodate and process structurally similar amino acids such as threonine, to avoid such errors, it has a 'posttransfer' editing activity that hydrolyzes mischarged Thr-tRNA(Val) in a tRNA-dependent manner. This Shigella dysenteriae serotype 1 (strain Sd197) protein is Valine--tRNA ligase.